Here is a 791-residue protein sequence, read N- to C-terminus: Phosphoenolpyruvate synthase (791 aa).

Position 416 is a phosphothreonine (threonine 416). Histidine 418 (tele-phosphohistidine intermediate) is an active-site residue. Substrate contacts are provided by arginine 508, arginine 575, glutamate 677, glycine 698, serine 699, asparagine 700, and aspartate 701. Position 677 (glutamate 677) interacts with Mg(2+). Aspartate 701 contacts Mg(2+). Tyrosine 744 is modified (phosphotyrosine). Cysteine 748 acts as the Proton donor in catalysis.

This sequence belongs to the PEP-utilizing enzyme family. Requires Mg(2+) as cofactor.

The enzyme catalyses pyruvate + ATP + H2O = phosphoenolpyruvate + AMP + phosphate + 2 H(+). It functions in the pathway carbohydrate biosynthesis; gluconeogenesis. In terms of biological role, catalyzes the phosphorylation of pyruvate to phosphoenolpyruvate. In Pseudomonas aeruginosa (strain UCBPP-PA14), this protein is Phosphoenolpyruvate synthase (ppsA).